A 105-amino-acid polypeptide reads, in one-letter code: NADH-quinone oxidoreductase subunit K (105 aa).

The next 3 helical transmembrane spans lie at 8–28 (VTNG…GIII), 33–53 (ILIL…NFLI), and 65–85 (VFVF…LAIV).

This sequence belongs to the complex I subunit 4L family. In terms of assembly, NDH-1 is composed of 14 different subunits. Subunits NuoA, H, J, K, L, M, N constitute the membrane sector of the complex.

Its subcellular location is the cell inner membrane. The enzyme catalyses a quinone + NADH + 5 H(+)(in) = a quinol + NAD(+) + 4 H(+)(out). Functionally, NDH-1 shuttles electrons from NADH, via FMN and iron-sulfur (Fe-S) centers, to quinones in the respiratory chain. The immediate electron acceptor for the enzyme in this species is believed to be ubiquinone. Couples the redox reaction to proton translocation (for every two electrons transferred, four hydrogen ions are translocated across the cytoplasmic membrane), and thus conserves the redox energy in a proton gradient. This Francisella philomiragia subsp. philomiragia (strain ATCC 25017 / CCUG 19701 / FSC 153 / O#319-036) protein is NADH-quinone oxidoreductase subunit K.